The sequence spans 372 residues: 4-hydroxy-3-methylbut-2-en-1-yl diphosphate synthase (flavodoxin) (372 aa).

Residues C270, C273, C305, and E312 each coordinate [4Fe-4S] cluster.

This sequence belongs to the IspG family. [4Fe-4S] cluster serves as cofactor.

The catalysed reaction is (2E)-4-hydroxy-3-methylbut-2-enyl diphosphate + oxidized [flavodoxin] + H2O + 2 H(+) = 2-C-methyl-D-erythritol 2,4-cyclic diphosphate + reduced [flavodoxin]. The protein operates within isoprenoid biosynthesis; isopentenyl diphosphate biosynthesis via DXP pathway; isopentenyl diphosphate from 1-deoxy-D-xylulose 5-phosphate: step 5/6. Its function is as follows. Converts 2C-methyl-D-erythritol 2,4-cyclodiphosphate (ME-2,4cPP) into 1-hydroxy-2-methyl-2-(E)-butenyl 4-diphosphate. The protein is 4-hydroxy-3-methylbut-2-en-1-yl diphosphate synthase (flavodoxin) of Alcanivorax borkumensis (strain ATCC 700651 / DSM 11573 / NCIMB 13689 / SK2).